The sequence spans 103 residues: Large ribosomal subunit protein uL24 (103 aa).

The protein belongs to the universal ribosomal protein uL24 family. As to quaternary structure, part of the 50S ribosomal subunit.

Its function is as follows. One of two assembly initiator proteins, it binds directly to the 5'-end of the 23S rRNA, where it nucleates assembly of the 50S subunit. Functionally, one of the proteins that surrounds the polypeptide exit tunnel on the outside of the subunit. The protein is Large ribosomal subunit protein uL24 of Sinorhizobium fredii (strain NBRC 101917 / NGR234).